The chain runs to 457 residues: tRNA-2-methylthio-N(6)-dimethylallyladenosine synthase (457 aa).

Residues 19–134 (RKLFIETYGC…LPNLVGAVEH (116 aa)) enclose the MTTase N-terminal domain. 6 residues coordinate [4Fe-4S] cluster: C28, C64, C98, C172, C176, and C179. The Radical SAM core domain maps to 158–390 (PGVHISGFVS…IDLQNKLSEE (233 aa)). The TRAM domain occupies 393–456 (LRDIGKTFEV…SATLFGEPVE (64 aa)).

This sequence belongs to the methylthiotransferase family. MiaB subfamily. Monomer. The cofactor is [4Fe-4S] cluster.

It localises to the cytoplasm. It carries out the reaction N(6)-dimethylallyladenosine(37) in tRNA + (sulfur carrier)-SH + AH2 + 2 S-adenosyl-L-methionine = 2-methylsulfanyl-N(6)-dimethylallyladenosine(37) in tRNA + (sulfur carrier)-H + 5'-deoxyadenosine + L-methionine + A + S-adenosyl-L-homocysteine + 2 H(+). Its function is as follows. Catalyzes the methylthiolation of N6-(dimethylallyl)adenosine (i(6)A), leading to the formation of 2-methylthio-N6-(dimethylallyl)adenosine (ms(2)i(6)A) at position 37 in tRNAs that read codons beginning with uridine. The sequence is that of tRNA-2-methylthio-N(6)-dimethylallyladenosine synthase from Parabacteroides distasonis (strain ATCC 8503 / DSM 20701 / CIP 104284 / JCM 5825 / NCTC 11152).